The chain runs to 324 residues: PDZ domain-containing protein MAGIX (324 aa).

The tract at residues 1 to 26 (MDSRAGNTADPRGGRRGGGLQGSRSP) is disordered. The PDZ domain maps to 128 to 212 (SVELTRGPAG…HLCLVLQRPQ (85 aa)). The span at 216–241 (GSRIKEVGGHRKTDRSLDPRGSRVES) shows a compositional bias: basic and acidic residues. Residues 216-263 (GSRIKEVGGHRKTDRSLDPRGSRVESRSTISPVHHRPKTRTSPRPSPE) form a disordered region. The residue at position 261 (S261) is a Phosphoserine.

The protein is PDZ domain-containing protein MAGIX (Magix) of Mus musculus (Mouse).